The sequence spans 142 residues: Small ribosomal subunit protein bS6 (142 aa).

The interval 110 to 142 (NKKPSHAKEKHEKTEHAHSHHTEEAGSKESHSE) is disordered.

Belongs to the bacterial ribosomal protein bS6 family.

In terms of biological role, binds together with bS18 to 16S ribosomal RNA. The chain is Small ribosomal subunit protein bS6 from Helicobacter acinonychis (strain Sheeba).